The primary structure comprises 400 residues: Putative C-type lectin domain family 20 member A (400 aa).

Residues 1–20 form the signal peptide; the sequence is MLPRALLLSFCAAALQLVSS. 2 C-type lectin domains span residues 26-131 and 159-275; these read LVKE…FLCY and ISGQ…FFCF. 4 disulfide bridges follow: C40-C130, C105-C122, C180-C274, and C248-C266. The segment at 287 to 346 is disordered; sequence ELPPLFHTSPTEMTEETTPRPGRAVASVGSGTDRRDTAAATEAQHLSSESKEKTSAQKSG.

The polypeptide is Putative C-type lectin domain family 20 member A (Homo sapiens (Human)).